The primary structure comprises 485 residues: Efflux pump bik6 (485 aa).

Helical transmembrane passes span 42–62 (VYTTALWALTTCWITFASAIY), 86–106 (LLIFGFALGPMLWAPLCEVYG), 108–128 (KWPALAPYFISAAFAFGTATA), 139–159 (FFAGVFGSSPISITGGSIVDI), 172–192 (YGITIAAAPTLGPIIGGAFIA), and 199–219 (WTEYLTGIVMMVQFVLDALWL). Residue N241 is glycosylated (N-linked (GlcNAc...) asparagine). The next 6 membrane-spanning stretches (helical) occupy residues 269 to 289 (MLLDPICLLLTIYTSFVYAIL), 306 to 326 (WGPVVSQLPFLSLLIGCLFAA), 353 to 373 (LPPMMVGGFAFSAGLFLFGWT), 379 to 399 (SSPWPSIIGVFLTGVGFTTIF), 417 to 437 (AIAANTFVRSMAAGAFPLFVW), and 447 to 467 (WGSTIFACISVLLLPAPFLFF).

This sequence belongs to the major facilitator superfamily.

It is found in the membrane. In terms of biological role, efflux pump; part of the gene cluster that mediates the biosynthesis of bikaverin, a red pigment also considered as a mycotoxin. The polypeptide is Efflux pump bik6 (Gibberella fujikuroi (strain CBS 195.34 / IMI 58289 / NRRL A-6831) (Bakanae and foot rot disease fungus)).